The following is a 695-amino-acid chain: Elongation factor G 1 (695 aa).

The 279-residue stretch at 6–284 folds into the tr-type G domain; it reads KKVRNIGISA…VTRYLPCPAD (279 aa). Residues 15–22, 82–86, and 136–139 each bind GTP; these read AHIDSGKT, DTPGH, and NKCD.

Belongs to the TRAFAC class translation factor GTPase superfamily. Classic translation factor GTPase family. EF-G/EF-2 subfamily.

Its subcellular location is the cytoplasm. Functionally, catalyzes the GTP-dependent ribosomal translocation step during translation elongation. During this step, the ribosome changes from the pre-translocational (PRE) to the post-translocational (POST) state as the newly formed A-site-bound peptidyl-tRNA and P-site-bound deacylated tRNA move to the P and E sites, respectively. Catalyzes the coordinated movement of the two tRNA molecules, the mRNA and conformational changes in the ribosome. This chain is Elongation factor G 1, found in Syntrophus aciditrophicus (strain SB).